A 1163-amino-acid polypeptide reads, in one-letter code: Rho GTPase-activating protein 45 (1163 aa).

The disordered stretch occupies residues 1-99 (MFSRKKRELM…KRPTSLSRHA (99 aa)). Phosphoserine occurs at positions 23 and 25. The segment covering 55 to 65 (LPKELPRKDGA) has biased composition (basic and acidic residues). S100, S120, and S126 each carry phosphoserine. Disordered stretches follow at residues 118–137 (HRSPLTAASPGELPTEGTGP), 262–282 (PPGDSSQSMESLYGSGSEGTP), and 454–475 (EEEQAGTAPGAGSTATKTLDKR). An F-BAR domain is found at 296 to 566 (EEVDVLLQRC…SSKLYDPGQQ (271 aa)). Positions 403-526 (EHEKRRKEIK…QIQEVIRQSD (124 aa)) form a coiled coil. Positions 458 to 470 (AGTAPGAGSTATK) are enriched in low complexity. Phosphoserine occurs at positions 596, 605, and 619. Residues 610-695 (DVAGPEAAGS…VDPEGGAGAS (86 aa)) form a disordered region. Residues 633–644 (KGHRAGRGHQVH) are compositionally biased toward basic residues. S646 carries the phosphoserine modification. Residues 673–682 (TSSSGTMSST) show a composition bias toward low complexity. The segment at 729–774 (THRLRKLRTPAKCRECNSYVYFQGAECEECCLACHKKCLETLAIQC) adopts a Phorbol-ester/DAG-type zinc-finger fold. Positions 788–1001 (QDFSHAARSA…TLIVHYGLVF (214 aa)) constitute a Rho-GAP domain. Phosphoserine is present on residues S976, S1054, S1057, and S1059. 2 disordered regions span residues 1042–1067 (AAEDGCRESRVVSNDSDSDLEEASEL) and 1087–1163 (SEAS…PEFV). The span at 1087-1099 (SEASLEEASGSHS) shows a compositional bias: low complexity. Polar residues predominate over residues 1125 to 1137 (SGFNTNQSNNVLQ).

It localises to the cytoplasm. It is found in the cell projection. The protein resides in the ruffle membrane. In terms of biological role, contains a GTPase activator for the Rho-type GTPases (RhoGAP) domain that would be able to negatively regulate the actin cytoskeleton as well as cell spreading. However, also contains N-terminally a BAR-domin which is able to play an autoinhibitory effect on this RhoGAP activity. The sequence is that of Rho GTPase-activating protein 45 from Pongo abelii (Sumatran orangutan).